The primary structure comprises 579 residues: MSGTLVRMAGPTVVAEGLAGASLNEVVRVGEERLLGEIIRIEGDRATIQVYEETAGLALGEPVEASGEPLAVELGPGLLGSVFDGVQRPLSELAAREGDFLGRGASLPALDRARAWEFEPAVAPGDRVEGGVRLGVARAPGAPDHPVVVPPGVAGRVAEVRAGARRVEEPAVLLEGGATLALLERWPVRRPRPARRRLPPDVPFLTGQRVLDCFFPVSAGGTAVVPGGFGTGKTVLEQSLAKWAAADVVVYVGCGERGNEMSEVLDEFPRLEDPRTGGPLLARTVMIVNTSNMPVAAREASIYTGAAIAEYFRDMGRSVALMIDSTSRWAEALREISARLEEMPGEEGYPTYLASRLARFYERAGRVETLGGAEGAVTMVGAVSPPGGDLSEPVTQCSLRATGALWALSADLAHRRHYPAVDWSVSFTLEGDRLAGWFEREAGDGFGALRDEARKLLQRERELAEVAELVGTESLQDAERLVLESARLLREGFLRQSALDPADATCPPAKAFEMLRLFLEWHRRAGAAIGAGVPLRSILDTGLGARLLRLGQLPAAEVPAAAAALRADLSEALARMEAE.

227 to 234 (GGFGTGKT) lines the ATP pocket.

The protein belongs to the ATPase alpha/beta chains family.

The enzyme catalyses ATP + H2O + 4 H(+)(in) = ADP + phosphate + 5 H(+)(out). Produces ATP from ADP in the presence of a proton gradient across the membrane. The V-type alpha chain is a catalytic subunit. This Anaeromyxobacter dehalogenans (strain 2CP-C) protein is V-type ATP synthase alpha chain.